Here is a 346-residue protein sequence, read N- to C-terminus: Selenide, water dikinase (346 aa).

The active site involves Sec-16. A non-standard amino acid (selenocysteine) is located at residue Sec-16. ATP is bound by residues Lys-19 and 47 to 49 (TAD). Position 50 (Asp-50) interacts with Mg(2+). ATP-binding positions include Asp-67, Asp-90, and 138–140 (GHS). Asp-90 is a Mg(2+) binding site. Asp-226 is a binding site for Mg(2+).

The protein belongs to the selenophosphate synthase 1 family. Class I subfamily. As to quaternary structure, homodimer. It depends on Mg(2+) as a cofactor.

It catalyses the reaction hydrogenselenide + ATP + H2O = selenophosphate + AMP + phosphate + 2 H(+). In terms of biological role, synthesizes selenophosphate from selenide and ATP. The protein is Selenide, water dikinase of Haemophilus influenzae (strain ATCC 51907 / DSM 11121 / KW20 / Rd).